The sequence spans 582 residues: Insulin-like growth factor 2 mRNA-binding protein 3 (582 aa).

2 consecutive RRM domains span residues 2-75 (NKLY…HSVP) and 81-156 (CKLQ…YIPD). A disordered region spans residues 164–190 (PAVGGRRGFNPRGPPRQGSPSLGARPK). Residue Ser-182 is modified to Phosphoserine. KH domains lie at 194 to 259 (DVPL…CRNI), 275 to 342 (EIPL…EEEI), 408 to 473 (SETV…QGRI), and 490 to 556 (KLEA…QRKI). A disordered region spans residues 562–582 (QVRRQQQPKPSAAGPPVARRK).

The protein belongs to the RRM IMP/VICKZ family. Homodimer and multimer.

It is found in the cytoplasm. The protein resides in the nucleus. Its subcellular location is the P-body. The protein localises to the stress granule. Functionally, RNA-binding factor that may recruit target transcripts to cytoplasmic protein-RNA complexes (mRNPs). This transcript 'caging' into mRNPs allows mRNA transport and transient storage. It also modulates the rate and location at which target transcripts encounter the translational apparatus and shields them from endonuclease attacks or microRNA-mediated degradation. Preferentially binds to N6-methyladenosine (m6A)-containing mRNAs and increases their stability. Involved in neuronal crest migration. The chain is Insulin-like growth factor 2 mRNA-binding protein 3 (igf2bp3) from Danio rerio (Zebrafish).